Reading from the N-terminus, the 648-residue chain is Beta-glucuronidase (648 aa).

Residues 1–22 form the signal peptide; it reads MSPRRSVCWFVLGQLLCSCAVA. Residues N172 and N416 are each glycosylated (N-linked (GlcNAc...) asparagine). E447 serves as the catalytic Proton donor. An N-linked (GlcNAc...) asparagine glycan is attached at N627.

It belongs to the glycosyl hydrolase 2 family. Homotetramer. Post-translationally, undergoes a post-transcriptional proteolytic cleavage near its C-terminal end, which reduces its size by approximately 3 kDa. The site of this cleavage has as yet not been determined.

It is found in the lysosome. The enzyme catalyses a beta-D-glucuronoside + H2O = D-glucuronate + an alcohol. With respect to regulation, inhibited by L-aspartic acid. In terms of biological role, plays an important role in the degradation of dermatan and keratan sulfates. In Rattus norvegicus (Rat), this protein is Beta-glucuronidase (Gusb).